Reading from the N-terminus, the 94-residue chain is Small ribosomal subunit protein uS19 (94 aa).

It belongs to the universal ribosomal protein uS19 family.

Its function is as follows. Protein S19 forms a complex with S13 that binds strongly to the 16S ribosomal RNA. In Syntrophomonas wolfei subsp. wolfei (strain DSM 2245B / Goettingen), this protein is Small ribosomal subunit protein uS19.